Reading from the N-terminus, the 120-residue chain is NAD(P)H-quinone oxidoreductase subunit 3, chloroplastic (120 aa).

3 helical membrane-spanning segments follow: residues 9–29, 64–84, and 88–108; these read IFWVFLIISSVIPILAFLISG, MFALVFVVFDVETVFLYPWAM, and VLGVSVFIEALIFVLILIVGL.

This sequence belongs to the complex I subunit 3 family. NDH is composed of at least 16 different subunits, 5 of which are encoded in the nucleus.

It is found in the plastid. It localises to the chloroplast thylakoid membrane. The enzyme catalyses a plastoquinone + NADH + (n+1) H(+)(in) = a plastoquinol + NAD(+) + n H(+)(out). It carries out the reaction a plastoquinone + NADPH + (n+1) H(+)(in) = a plastoquinol + NADP(+) + n H(+)(out). NDH shuttles electrons from NAD(P)H:plastoquinone, via FMN and iron-sulfur (Fe-S) centers, to quinones in the photosynthetic chain and possibly in a chloroplast respiratory chain. The immediate electron acceptor for the enzyme in this species is believed to be plastoquinone. Couples the redox reaction to proton translocation, and thus conserves the redox energy in a proton gradient. The chain is NAD(P)H-quinone oxidoreductase subunit 3, chloroplastic from Cucumis sativus (Cucumber).